A 785-amino-acid polypeptide reads, in one-letter code: Probable ATP-dependent RNA helicase ddx17 (785 aa).

Low complexity-rich tracts occupy residues 1-11 (MSYNSSNSGSG), 18-37 (SGNSSYSSTSRGGSSYGNRS), 49-95 (SYNR…YGPS), and 105-177 (GSSS…NGYS). The interval 1-233 (MSYNSSNSGS…TPSTSYNGGS (233 aa)) is disordered. The segment covering 178 to 191 (KPTSNYSYSNGYTG) has biased composition (polar residues). Residues 192–233 (PTTNYSSYSNGYSTPPTSTSTSSSSTTTTTTTTPSTSYNGGS) are compositionally biased toward low complexity. Positions 384 to 412 (MQFTQAPFPGYLMKEIIGAGFPNPTPIQS) match the Q motif motif. The Helicase ATP-binding domain occupies 415–590 (WPIALKGRDI…HDFLTDHIQV (176 aa)). 428–435 (AKTGSGKT) is an ATP binding site. Positions 538-541 (DEAD) match the DEAD box motif. The Helicase C-terminal domain maps to 602-763 (NVRQIVEVCQ…KIPIELSNLS (162 aa)). Residues 764–774 (VTPSTSSNTKK) show a composition bias toward polar residues. Positions 764-785 (VTPSTSSNTKKFSPYPTYSKRY) are disordered.

This sequence belongs to the DEAD box helicase family. DDX5/DBP2 subfamily.

Its subcellular location is the cytoplasm. It is found in the nucleus. The enzyme catalyses ATP + H2O = ADP + phosphate + H(+). Its function is as follows. Probable ATP-dependent RNA helicase which may be involved nonsense-mediated mRNA decay and ribosome biogenesis through rRNA processing. The polypeptide is Probable ATP-dependent RNA helicase ddx17 (ddx17) (Dictyostelium discoideum (Social amoeba)).